The primary structure comprises 92 residues: Small ribosomal subunit protein bS20 (92 aa).

Residues 1–23 (MANSPSAKKRAKQAEKRRSHNAS) form a disordered region. Basic residues predominate over residues 7–20 (AKKRAKQAEKRRSH).

Belongs to the bacterial ribosomal protein bS20 family.

Its function is as follows. Binds directly to 16S ribosomal RNA. This Ectopseudomonas mendocina (strain ymp) (Pseudomonas mendocina) protein is Small ribosomal subunit protein bS20.